Reading from the N-terminus, the 167-residue chain is uncharacterized protein (167 aa).

The disordered stretch occupies residues 1 to 21 (MFDFSFPTPASAGTRMGPASC).

This is an uncharacterized protein from Homo sapiens (Human).